A 4059-amino-acid chain; its full sequence is Fibrocystin (4059 aa).

Residues 1–18 form the signal peptide; the sequence is MMLAWLVSLLSMEVLLLA. Over 19–3851 the chain is Extracellular; sequence KPYSSFQFEP…LPVASKERST (3833 aa). One can recognise an IPT/TIG 1; atypical domain in the interval 25–109; it reads QFEPAEGSLA…AGPYSLEMRS (85 aa). Residues Asn-55 and Asn-224 are each glycosylated (N-linked (GlcNAc...) asparagine). 2 consecutive IPT/TIG domains span residues 135 to 230 and 257 to 333; these read PVLY…FSVF and PEIL…FEVG. One can recognise a PA14 domain in the interval 323-483; that stretch reads AGNRGLRFEV…TWLNPDVVNT (161 aa). N-linked (GlcNAc...) asparagine glycans are attached at residues Asn-355, Asn-385, Asn-518, Asn-527, Asn-620, Asn-639, Asn-709, Asn-867, Asn-965, Asn-975, Asn-1082, Asn-1114, Asn-1133, Asn-1239, Asn-1273, Asn-1308, Asn-1319, Asn-1344, Asn-1373, Asn-1456, Asn-1471, Asn-1528, Asn-1613, Asn-1627, Asn-1694, Asn-1760, Asn-1775, Asn-1875, Asn-1879, Asn-1915, Asn-1955, Asn-2030, and Asn-2139. 2 IPT/TIG domains span residues 945–997 and 1017–1100; these read LVHF…FMLV and PRLD…AFTY. The 85-residue stretch at 1106-1190 folds into the IPT/TIG 6; atypical domain; the sequence is PVIVSLSRNR…IRSQGVDLYI (85 aa). The IPT/TIG 7 domain occupies 1198–1266; it reads SVEPCSGSLL…RADVLTVLAS (69 aa). Positions 1297 to 1378 constitute an IPT/TIG 8; atypical domain; that stretch reads PVVTAMWGEF…MGFANMSVVP (82 aa). The region spanning 1385–1466 is the IPT/TIG 9 domain; it reads PQIIAIFPTH…ITVLVNGLTS (82 aa). IPT/TIG domains lie at 1482 to 1566 and 1569 to 1637; these read PIVD…RNFF and PQVL…IDVN. An IPT/TIG 12; atypical domain is found at 1654-1738; it reads PELLSVSRSQ…VLRATVTSVT (85 aa). The G8 1 domain occupies 1928–2049; the sequence is HSWFPQRVPH…PEVTVTYLQA (122 aa). PbH1 repeat units lie at residues 2244-2266 and 2287-2321; these read TWGL…LLGS and EQGS…YTFS. The N-linked (GlcNAc...) asparagine glycan is linked to Asn-2380. PbH1 repeat units follow at residues 2404–2426 and 2459–2481; these read SNNL…DILE and RWEL…AIRT. N-linked (GlcNAc...) asparagine glycosylation is found at Asn-2466, Asn-2503, Asn-2529, Asn-2547, Asn-2581, Asn-2589, Asn-2627, Asn-2747, and Asn-2762. One can recognise a G8 2 domain in the interval 2741–2867; that stretch reads KGWGGYNHTI…PKKSWVHLGA (127 aa). PbH1 repeat units follow at residues 3004–3026 and 3027–3049; these read SAGS…HASS and SHGV…DVEG. Asn-3051 is a glycosylation site (N-linked (GlcNAc...) asparagine). The stretch at 3080-3102 is one PbH1 7 repeat; that stretch reads AEDIILHGNVVAGSERLGFHVGG. N-linked (GlcNAc...) asparagine glycosylation is found at Asn-3133 and Asn-3162. One copy of the PbH1 8 repeat lies at 3188–3212; sequence TVQITLRNSVIVATSSSFDCIHDRK. Residues Asn-3218, Asn-3719, and Asn-3831 are each glycosylated (N-linked (GlcNAc...) asparagine). Residues 3852 to 3872 traverse the membrane as a helical segment; it reads IILALSLCSVASWVALSCLVC. A ciliary targeting sequence (CST) region spans residues 3869–3886; that stretch reads CLVCCWFKKSKTRKIKPE. Residues 3873–4059 are Cytoplasmic-facing; sequence CWFKKSKTRK…LHTAPPETIQ (187 aa). The span at 3885 to 3898 shows a compositional bias: basic and acidic residues; that stretch reads PEDISESQAKEQKK. The segment at 3885-3915 is disordered; the sequence is PEDISESQAKEQKKNTHNSSKPRGLQAKTAK. The nuclear localization signal (NLS) stretch occupies residues 3946–3970; the sequence is KRKVSRLAVTEERTTTPAPKIPRIT. Residues 4015-4038 are disordered; that stretch reads QERKQGQEPSQLDKGSDCTGLSQE.

Interacts with CAMLG. Interacts with PKD2. Interacts (via CST) with ARF4; this interaction allows an efficient PKHD1 trafficking to the cilium. Interacts (via CST) with RAB8A; this interaction controls trafficking through the endomembrane systeme and to the cilium. Interacts (via CST) with TULP3; this interaction allows PKHD1 trafficking to the cilium. Post-translationally, palmitoylated. Palmitoylation facilitates the trafficking to the cilia and membrane targeting. N-glycosylated. In terms of processing, several proteolytic cleavages occur within the extracellular domain, whereas at least one cleavage occurs within the cytoplasmic domain. Cleaved by a probable proprotein convertase which produces an extracellular domain (polyductin extracellular domain, (PECD)) and a C-terminal fragment (polyductin transmembrane fragment (PTM)) which are tethered together by disulfide bonds. This extracellular domain (PECD) is then shed from the primary cilium by activation of a member of the ADAM metalloproteinase disintegrins family, resulting in concomitant release of an intra-cellular C-terminal fragment (ICD) via a gamma-secretase-dependent process. The proteolytic cleavage of the C-terminal intracellular fragment (ICD) is controlled by cytosolic calcium concentration and activation of PKC. Expressed in bile ducts and distal nephron segments but is absent from the proximal tubule. Expressed in pancreas and kidney but also in the liver. Expressed primarily in the distal tubule and thick ascending limb of the loop of Henle, and at low-level in the proximal tubule before renal development is complete at P0.

It is found in the cell membrane. It localises to the cytoplasm. Its subcellular location is the apical cell membrane. The protein resides in the cytoskeleton. The protein localises to the cilium basal body. It is found in the cell projection. It localises to the cilium. Its subcellular location is the spindle. The protein resides in the chromosome. The protein localises to the centromere. It is found in the nucleus. It localises to the secreted. Its subcellular location is the extracellular exosome. The protein resides in the endoplasmic reticulum. The protein localises to the golgi apparatus. Its function is as follows. Promotes ciliogenesis in renal epithelial cells and therefore participates in the tubules formation and/or ensures the maintenance of the architecture of the lumen of the kidney. Has an impact on cellular symmetry by ensuring correct bipolar cell division through the regulation of centrosome duplication and mitotic spindle assembly and by maintaining oriented cell division (OCD) during tubular elongation through planar cell polarity (PCP) pathway. During epithelial cell morphogenesis, it also regulates cell-cell and cell-matrix adhesion and participates in cell motility. Promotes cell-cell contact through the positive regulation of PTK2 kinase activity leading to either positive regulation of epithelial cell proliferation through the HRAS/RAF1 pathways, or negative regulation of apoptosis through the PDK1/AKT1 pathway. May act in collecting-duct and biliary differentiation. May participate in the regulation of the cholangiocytes proliferation and the CCN2 production in an CXCL8-dependent manner. The sequence is that of Fibrocystin from Mus musculus (Mouse).